Consider the following 45-residue polypeptide: Large ribosomal subunit protein bL34 (45 aa).

This sequence belongs to the bacterial ribosomal protein bL34 family.

This Prochlorococcus marinus (strain MIT 9313) protein is Large ribosomal subunit protein bL34.